Consider the following 29-residue polypeptide: Cyclotide mden-B (29 aa).

The segment at residues 1–29 (GLPICGETCFTGKCYTPGCTCSYPICKKN) is a cross-link (cyclopeptide (Gly-Asn)). Intrachain disulfides connect C5-C19, C9-C21, and C14-C26.

Belongs to the cyclotide family. Moebius subfamily. This is a cyclic peptide.

Its function is as follows. Probably participates in a plant defense mechanism. The sequence is that of Cyclotide mden-B from Melicytus dentatus (Tree violet).